We begin with the raw amino-acid sequence, 889 residues long: Alanine--tRNA ligase (889 aa).

Positions 569, 573, 671, and 675 each coordinate Zn(2+).

The protein belongs to the class-II aminoacyl-tRNA synthetase family. Requires Zn(2+) as cofactor.

It localises to the cytoplasm. The catalysed reaction is tRNA(Ala) + L-alanine + ATP = L-alanyl-tRNA(Ala) + AMP + diphosphate. Functionally, catalyzes the attachment of alanine to tRNA(Ala) in a two-step reaction: alanine is first activated by ATP to form Ala-AMP and then transferred to the acceptor end of tRNA(Ala). Also edits incorrectly charged Ser-tRNA(Ala) and Gly-tRNA(Ala) via its editing domain. The polypeptide is Alanine--tRNA ligase (Parasynechococcus marenigrum (strain WH8102)).